The sequence spans 485 residues: Argininosuccinate lyase (485 aa).

It belongs to the lyase 1 family. Argininosuccinate lyase subfamily.

The protein localises to the cytoplasm. The enzyme catalyses 2-(N(omega)-L-arginino)succinate = fumarate + L-arginine. It functions in the pathway amino-acid biosynthesis; L-arginine biosynthesis; L-arginine from L-ornithine and carbamoyl phosphate: step 3/3. The chain is Argininosuccinate lyase from Halobacterium salinarum (strain ATCC 29341 / DSM 671 / R1).